The chain runs to 108 residues: uncharacterized protein (108 aa).

A disordered region spans residues 74–108; that stretch reads TGSKKRDSKANSRSRPSGTITSRGARIGLQGYKSH. Polar residues predominate over residues 84 to 95; it reads NSRSRPSGTITS.

This is an uncharacterized protein from Saccharomyces cerevisiae (strain ATCC 204508 / S288c) (Baker's yeast).